The chain runs to 146 residues: Large ribosomal subunit protein bL9 (146 aa).

It belongs to the bacterial ribosomal protein bL9 family.

Functionally, binds to the 23S rRNA. This chain is Large ribosomal subunit protein bL9, found in Deinococcus geothermalis (strain DSM 11300 / CIP 105573 / AG-3a).